An 85-amino-acid polypeptide reads, in one-letter code: Large ribosomal subunit protein bL31 (85 aa).

The segment at 64-85 (KYGMSESQGAGGKGNAKKKDEK) is disordered.

Belongs to the bacterial ribosomal protein bL31 family. Type A subfamily. Part of the 50S ribosomal subunit.

Binds the 23S rRNA. In Acaryochloris marina (strain MBIC 11017), this protein is Large ribosomal subunit protein bL31.